A 358-amino-acid chain; its full sequence is Biotin synthase (358 aa).

Residues 44–272 (NRVRLNYLVN…DSEVRAAAGR (229 aa)) form the Radical SAM core domain. [4Fe-4S] cluster is bound by residues Cys-59, Cys-63, and Cys-66. Residues Cys-103, Cys-136, Cys-196, and Arg-267 each contribute to the [2Fe-2S] cluster site.

Belongs to the radical SAM superfamily. Biotin synthase family. In terms of assembly, homodimer. The cofactor is [4Fe-4S] cluster. Requires [2Fe-2S] cluster as cofactor.

It catalyses the reaction (4R,5S)-dethiobiotin + (sulfur carrier)-SH + 2 reduced [2Fe-2S]-[ferredoxin] + 2 S-adenosyl-L-methionine = (sulfur carrier)-H + biotin + 2 5'-deoxyadenosine + 2 L-methionine + 2 oxidized [2Fe-2S]-[ferredoxin]. It functions in the pathway cofactor biosynthesis; biotin biosynthesis; biotin from 7,8-diaminononanoate: step 2/2. In terms of biological role, catalyzes the conversion of dethiobiotin (DTB) to biotin by the insertion of a sulfur atom into dethiobiotin via a radical-based mechanism. The sequence is that of Biotin synthase from Cutibacterium acnes (strain DSM 16379 / KPA171202) (Propionibacterium acnes).